The sequence spans 171 residues: MEPAADSSSSLQTFQTEVTEDSFGKFILTCNIARIRGEPSNVYTGLNIGCRLPECPPENPFEIYYLMKDSELQENNDWIRLYLELAVATTDRNREASDFGLSNLEIVNVAVDAEGLLNAKNAIFYIRYKDLYEARLGNAVFDRIAIVRRIFDEDTGRFTLVGQNQSSDIIN.

The protein belongs to the UPF0725 (EMB2204) family.

This is UPF0725 protein At3g25080 from Arabidopsis thaliana (Mouse-ear cress).